A 190-amino-acid chain; its full sequence is B3 domain-containing protein At4g01580 (190 aa).

Residues Met-1–Ser-25 are disordered. Over residues Thr-12–Pro-23 the composition is skewed to polar residues. Residues Lys-29–Ser-122 constitute a DNA-binding region (TF-B3).

It is found in the nucleus. The protein is B3 domain-containing protein At4g01580 of Arabidopsis thaliana (Mouse-ear cress).